Consider the following 102-residue polypeptide: Putative sortase YwpE (102 aa).

Residue histidine 17 is the Proton donor/acceptor of the active site. Residue cysteine 78 is the Acyl-thioester intermediate of the active site.

This sequence belongs to the bacterial sortase family.

Functionally, seems not to play a major role if any as a sortase. This Bacillus subtilis (strain 168) protein is Putative sortase YwpE (ywpE).